A 98-amino-acid chain; its full sequence is Putative septation protein SpoVG (98 aa).

This sequence belongs to the SpoVG family.

Could be involved in septation. This chain is Putative septation protein SpoVG, found in Alkaliphilus metalliredigens (strain QYMF).